Consider the following 392-residue polypeptide: Succinate--CoA ligase [ADP-forming] subunit beta (392 aa).

Residues 9-236 (KELFAAHGVP…PSAADPLEAK (228 aa)) form the ATP-grasp domain. Residues Lys-45, 52–54 (GRG), Val-94, and Glu-99 each bind ATP. Residues Asn-191 and Asp-205 each coordinate Mg(2+). Substrate-binding positions include Asn-256 and 318 to 320 (GIT).

Belongs to the succinate/malate CoA ligase beta subunit family. As to quaternary structure, heterotetramer of two alpha and two beta subunits. Requires Mg(2+) as cofactor.

It carries out the reaction succinate + ATP + CoA = succinyl-CoA + ADP + phosphate. It catalyses the reaction GTP + succinate + CoA = succinyl-CoA + GDP + phosphate. Its pathway is carbohydrate metabolism; tricarboxylic acid cycle; succinate from succinyl-CoA (ligase route): step 1/1. In terms of biological role, succinyl-CoA synthetase functions in the citric acid cycle (TCA), coupling the hydrolysis of succinyl-CoA to the synthesis of either ATP or GTP and thus represents the only step of substrate-level phosphorylation in the TCA. The beta subunit provides nucleotide specificity of the enzyme and binds the substrate succinate, while the binding sites for coenzyme A and phosphate are found in the alpha subunit. This chain is Succinate--CoA ligase [ADP-forming] subunit beta, found in Acidothermus cellulolyticus (strain ATCC 43068 / DSM 8971 / 11B).